The following is a 74-amino-acid chain: MRITYPSIDKLLSRVDSRYSLSVLAAKRAHELEAGDPPTLEHFKCDKAVGKALEEIAAGKVTVDPAHAEVNLED.

It belongs to the RNA polymerase subunit omega family. In terms of assembly, the RNAP catalytic core consists of 2 alpha, 1 beta, 1 beta' and 1 omega subunit. When a sigma factor is associated with the core the holoenzyme is formed, which can initiate transcription.

The catalysed reaction is RNA(n) + a ribonucleoside 5'-triphosphate = RNA(n+1) + diphosphate. Functionally, promotes RNA polymerase assembly. Latches the N- and C-terminal regions of the beta' subunit thereby facilitating its interaction with the beta and alpha subunits. This is DNA-directed RNA polymerase subunit omega from Lactobacillus acidophilus (strain ATCC 700396 / NCK56 / N2 / NCFM).